Consider the following 293-residue polypeptide: Elongation factor Ts (293 aa).

The involved in Mg(2+) ion dislocation from EF-Tu stretch occupies residues 79–82; that stretch reads TDFV. At Ser149 the chain carries Phosphoserine.

This sequence belongs to the EF-Ts family.

Its subcellular location is the cytoplasm. In terms of biological role, associates with the EF-Tu.GDP complex and induces the exchange of GDP to GTP. It remains bound to the aminoacyl-tRNA.EF-Tu.GTP complex up to the GTP hydrolysis stage on the ribosome. The chain is Elongation factor Ts (tsf) from Bacillus subtilis (strain 168).